A 482-amino-acid polypeptide reads, in one-letter code: Protein DETOXIFICATION 13 (482 aa).

12 helical membrane-spanning segments follow: residues 39–59 (LICF…LQII), 77–97 (LASS…SCAL), 124–144 (LALV…LLVF), 159–179 (AACL…TRYF), 188–208 (LLIT…LLVY), 218–238 (ALAL…LMCF), 268–288 (AAMI…SGLL), 297–317 (VLSV…AIAA), 337–357 (IVVY…STSL), 381–401 (MAPL…LSGI), 416–436 (LGAF…WIHL), and 439–459 (VGLW…LTLV).

This sequence belongs to the multi antimicrobial extrusion (MATE) (TC 2.A.66.1) family.

Its subcellular location is the membrane. This is Protein DETOXIFICATION 13 from Arabidopsis thaliana (Mouse-ear cress).